Reading from the N-terminus, the 402-residue chain is 26S proteasome regulatory subunit 8 (402 aa).

An ATP-binding site is contributed by 186 to 193 (GPPGTGKT).

Belongs to the AAA ATPase family.

The protein resides in the cytoplasm. The protein localises to the nucleus. Its function is as follows. The 26S proteasome is involved in the ATP-dependent degradation of ubiquitinated proteins. The regulatory (or ATPase) complex confers ATP dependency and substrate specificity to the 26S complex. In Manduca sexta (Tobacco hawkmoth), this protein is 26S proteasome regulatory subunit 8.